Consider the following 475-residue polypeptide: Pup--protein ligase (475 aa).

Glutamate 19 contributes to the Mg(2+) binding site. Arginine 64 provides a ligand contact to ATP. Residue tyrosine 66 participates in Mg(2+) binding. Residue aspartate 68 is the Proton acceptor of the active site. Glutamate 74 lines the Mg(2+) pocket. ATP is bound by residues threonine 77 and tryptophan 436.

The protein belongs to the Pup ligase/Pup deamidase family. Pup-conjugating enzyme subfamily.

It carries out the reaction ATP + [prokaryotic ubiquitin-like protein]-L-glutamate + [protein]-L-lysine = ADP + phosphate + N(6)-([prokaryotic ubiquitin-like protein]-gamma-L-glutamyl)-[protein]-L-lysine.. It participates in protein degradation; proteasomal Pup-dependent pathway. The protein operates within protein modification; protein pupylation. Catalyzes the covalent attachment of the prokaryotic ubiquitin-like protein modifier Pup to the proteasomal substrate proteins, thereby targeting them for proteasomal degradation. This tagging system is termed pupylation. The ligation reaction involves the side-chain carboxylate of the C-terminal glutamate of Pup and the side-chain amino group of a substrate lysine. The polypeptide is Pup--protein ligase (Corynebacterium aurimucosum (strain ATCC 700975 / DSM 44827 / CIP 107346 / CN-1) (Corynebacterium nigricans)).